We begin with the raw amino-acid sequence, 186 residues long: MNDYINGLLHKIDDKYLYIELNNSGYRFLYLKTDLKDLKLNQNNQVYVAINVIDNVFKYYGFKNQLIRDLFELLININTIGEKTAFLILENYNYNELIDIFKNGRTDKILQLKGIGNYTARLIINSVQKELFNNKISDKKNKVITSLEKLGYKTKDIYKIIINIDEDMNIEDLTKYVLEQLSYLHN.

Residues 1–63 (MNDYINGLLH…DNVFKYYGFK (63 aa)) form a domain I region. The interval 64–137 (NQLIRDLFEL…QKELFNNKIS (74 aa)) is domain II. Position 137 (serine 137) is a region of interest, flexible linker. Positions 137-186 (SDKKNKVITSLEKLGYKTKDIYKIIINIDEDMNIEDLTKYVLEQLSYLHN) are domain III.

Belongs to the RuvA family. In terms of assembly, homotetramer. Forms an RuvA(8)-RuvB(12)-Holliday junction (HJ) complex. HJ DNA is sandwiched between 2 RuvA tetramers; dsDNA enters through RuvA and exits via RuvB. An RuvB hexamer assembles on each DNA strand where it exits the tetramer. Each RuvB hexamer is contacted by two RuvA subunits (via domain III) on 2 adjacent RuvB subunits; this complex drives branch migration. In the full resolvosome a probable DNA-RuvA(4)-RuvB(12)-RuvC(2) complex forms which resolves the HJ.

The protein localises to the cytoplasm. Its function is as follows. The RuvA-RuvB-RuvC complex processes Holliday junction (HJ) DNA during genetic recombination and DNA repair, while the RuvA-RuvB complex plays an important role in the rescue of blocked DNA replication forks via replication fork reversal (RFR). RuvA specifically binds to HJ cruciform DNA, conferring on it an open structure. The RuvB hexamer acts as an ATP-dependent pump, pulling dsDNA into and through the RuvAB complex. HJ branch migration allows RuvC to scan DNA until it finds its consensus sequence, where it cleaves and resolves the cruciform DNA. The sequence is that of Holliday junction branch migration complex subunit RuvA from Mycoplasma mycoides subsp. mycoides SC (strain CCUG 32753 / NCTC 10114 / PG1).